The chain runs to 1030 residues: Isoleucine--tRNA ligase 2 (1030 aa).

The short motif at 48–58 (PFATGLPHYGH) is the 'HIGH' region element. The 'KMSKS' region signature appears at 589-593 (KMSKR). Residue lysine 592 participates in ATP binding.

Belongs to the class-I aminoacyl-tRNA synthetase family. IleS type 2 subfamily. Monomer. Zn(2+) is required as a cofactor.

It is found in the cytoplasm. It catalyses the reaction tRNA(Ile) + L-isoleucine + ATP = L-isoleucyl-tRNA(Ile) + AMP + diphosphate. Functionally, catalyzes the attachment of isoleucine to tRNA(Ile). As IleRS can inadvertently accommodate and process structurally similar amino acids such as valine, to avoid such errors it has two additional distinct tRNA(Ile)-dependent editing activities. One activity is designated as 'pretransfer' editing and involves the hydrolysis of activated Val-AMP. The other activity is designated 'posttransfer' editing and involves deacylation of mischarged Val-tRNA(Ile). Confers high-level resistance to the antibiotic mupirocin (pseudomonic acid A), an Ile-analog produced by P.fluorescens NCIMB 10586 itself that competitively inhibits activation by Ile-tRNA synthetase, thus inhibiting protein biosynthesis. This chain is Isoleucine--tRNA ligase 2 (ileS2), found in Pseudomonas fluorescens.